The primary structure comprises 450 residues: Molybdate-anion transporter (450 aa).

12 consecutive transmembrane segments (helical) span residues 1-21 (MLVT…GLEL), 43-63 (LDFY…APYL), 79-99 (ILYV…SSLV), 128-148 (FVLL…FSAF), 176-196 (FWNH…ACWM), 198-218 (LGPV…GALA), 249-269 (VLLL…FVFL), 278-298 (GAPL…GSSL), 311-331 (PMHL…MLTF), 344-364 (FIAF…MSFL), 376-396 (GVLN…LLVL), and 409-429 (FSIC…LFTV).

This sequence belongs to the major facilitator superfamily.

It localises to the cell membrane. Its function is as follows. Mediates high-affinity intracellular uptake of the rare oligo-element molybdenum. The protein is Molybdate-anion transporter (MFSD5) of Bos taurus (Bovine).